We begin with the raw amino-acid sequence, 942 residues long: tRNAse Z TRZ4, mitochondrial (942 aa).

A mitochondrion-targeting transit peptide spans 1–50 (MLTSSMPQNLSLFGFSPLKSSSFALILRPFSLYPPIFASSSPAPSRRPPR). Residues 38-85 (ASSSPAPSRRPPRTAGYRRSGPSPPRRKWSSFEEQKRKGRSPMEKDKA) are disordered. Basic and acidic residues predominate over residues 67-85 (SSFEEQKRKGRSPMEKDKA).

Belongs to the RNase Z family. As to quaternary structure, homodimer. Requires Zn(2+) as cofactor. Ca(2+) serves as cofactor. It depends on Mn(2+) as a cofactor. Mg(2+) is required as a cofactor.

It localises to the mitochondrion. The catalysed reaction is Endonucleolytic cleavage of RNA, removing extra 3' nucleotides from tRNA precursor, generating 3' termini of tRNAs. A 3'-hydroxy group is left at the tRNA terminus and a 5'-phosphoryl group is left at the trailer molecule.. In terms of biological role, zinc phosphodiesterase, which displays tRNA 3'-processing endonuclease activity. Involved in tRNA maturation, by removing a 3'-trailer from precursor tRNA. Can process the mitochondrial tRNA-like structures (t-elements). This chain is tRNAse Z TRZ4, mitochondrial, found in Arabidopsis thaliana (Mouse-ear cress).